The chain runs to 96 residues: ASNSD1 upstream open reading frame protein (96 aa).

Basic and acidic residues predominate over residues M1–D10. The disordered stretch occupies residues M1 to S28. Residues H23–K96 adopt a coiled-coil conformation.

Component of the PAQosome complex which is responsible for the biogenesis of several protein complexes and which consists of R2TP complex members RUVBL1, RUVBL2, RPAP3 and PIH1D1, URI complex members PFDN2, PFDN6, PDRG1, UXT and URI1 as well as ASDURF, POLR2E and DNAAF10/WDR92.

The protein localises to the cytoplasm. The sequence is that of ASNSD1 upstream open reading frame protein from Homo sapiens (Human).